The sequence spans 685 residues: A-type ATP synthase subunit I (685 aa).

Helical transmembrane passes span 172–192 (VGGL…VAVP), 348–368 (EIVP…LMFP), 394–414 (VIAV…EVFG), 464–484 (LFMG…NGVI), 538–558 (LVLA…PIIY), 604–624 (MFVI…ADVV), and 626–646 (ALLY…LAFA).

It belongs to the V-ATPase 116 kDa subunit family. As to quaternary structure, has multiple subunits with at least A(3), B(3), C, D, E, F, H, I and proteolipid K(x).

The protein localises to the cell membrane. Functionally, component of the A-type ATP synthase that produces ATP from ADP in the presence of a proton gradient across the membrane. The protein is A-type ATP synthase subunit I of Aeropyrum pernix (strain ATCC 700893 / DSM 11879 / JCM 9820 / NBRC 100138 / K1).